A 421-amino-acid polypeptide reads, in one-letter code: UDP-N-acetylglucosamine 1-carboxyvinyltransferase (421 aa).

A phosphoenolpyruvate-binding site is contributed by 22–23 (KN). Arg-94 is a binding site for UDP-N-acetyl-alpha-D-glucosamine. Catalysis depends on Cys-118, which acts as the Proton donor. Cys-118 carries the 2-(S-cysteinyl)pyruvic acid O-phosphothioketal modification. UDP-N-acetyl-alpha-D-glucosamine contacts are provided by residues 123-127 (RPMDL), Asp-308, and Ile-330.

It belongs to the EPSP synthase family. MurA subfamily.

It is found in the cytoplasm. It carries out the reaction phosphoenolpyruvate + UDP-N-acetyl-alpha-D-glucosamine = UDP-N-acetyl-3-O-(1-carboxyvinyl)-alpha-D-glucosamine + phosphate. It participates in cell wall biogenesis; peptidoglycan biosynthesis. Its function is as follows. Cell wall formation. Adds enolpyruvyl to UDP-N-acetylglucosamine. This is UDP-N-acetylglucosamine 1-carboxyvinyltransferase from Ruegeria pomeroyi (strain ATCC 700808 / DSM 15171 / DSS-3) (Silicibacter pomeroyi).